Reading from the N-terminus, the 478-residue chain is Cytochrome c-552 (478 aa).

Residues 1–26 (MTRIKINARRIFSLLIPFFFFTSVHA) form the signal peptide. Histidine 94 provides a ligand contact to heme c. Heme-binding residues include cysteine 122, cysteine 125, and lysine 126. Cysteine 160, cysteine 163, histidine 164, cysteine 209, cysteine 212, and histidine 213 together coordinate heme c. Ca(2+)-binding residues include glutamate 215, tyrosine 216, lysine 261, and glutamine 263. A substrate-binding site is contributed by tyrosine 216. Histidine 264 contacts substrate. Heme c contacts are provided by histidine 275, cysteine 282, cysteine 285, histidine 286, histidine 301, cysteine 314, cysteine 317, histidine 318, and histidine 393.

Belongs to the cytochrome c-552 family. It depends on Ca(2+) as a cofactor. Requires heme c as cofactor.

It is found in the periplasm. It catalyses the reaction 6 Fe(III)-[cytochrome c] + NH4(+) + 2 H2O = 6 Fe(II)-[cytochrome c] + nitrite + 8 H(+). It participates in nitrogen metabolism; nitrate reduction (assimilation). Its function is as follows. Catalyzes the reduction of nitrite to ammonia, consuming six electrons in the process. The protein is Cytochrome c-552 of Escherichia coli O17:K52:H18 (strain UMN026 / ExPEC).